The following is a 397-amino-acid chain: Riboflavin biosynthesis protein RibBA (397 aa).

The DHBP synthase stretch occupies residues 1 to 199 (MFHRIEEALE…IEDLIAYRRH (199 aa)). Residues 26 to 27 (RE), Asp-31, 138 to 142 (RAGHT), and Glu-162 contribute to the D-ribulose 5-phosphate site. Glu-27 is a binding site for Mg(2+). Position 141 (His-141) interacts with Mg(2+). The segment at 200-397 (HETFVTKEVE…VTKLGHLLNL (198 aa)) is GTP cyclohydrolase II. 250–254 (RVHSE) serves as a coordination point for GTP. Residues Cys-255, Cys-266, and Cys-268 each coordinate Zn(2+). Residues Gln-271, 293–295 (EGR), and Thr-315 contribute to the GTP site. Asp-327 functions as the Proton acceptor; for GTP cyclohydrolase activity in the catalytic mechanism. The Nucleophile; for GTP cyclohydrolase activity role is filled by Arg-329. The GTP site is built by Thr-350 and Lys-355.

The protein in the N-terminal section; belongs to the DHBP synthase family. It in the C-terminal section; belongs to the GTP cyclohydrolase II family. Mg(2+) is required as a cofactor. The cofactor is Mn(2+). Zn(2+) serves as cofactor.

It catalyses the reaction D-ribulose 5-phosphate = (2S)-2-hydroxy-3-oxobutyl phosphate + formate + H(+). The enzyme catalyses GTP + 4 H2O = 2,5-diamino-6-hydroxy-4-(5-phosphoribosylamino)-pyrimidine + formate + 2 phosphate + 3 H(+). It functions in the pathway cofactor biosynthesis; riboflavin biosynthesis; 2-hydroxy-3-oxobutyl phosphate from D-ribulose 5-phosphate: step 1/1. Its pathway is cofactor biosynthesis; riboflavin biosynthesis; 5-amino-6-(D-ribitylamino)uracil from GTP: step 1/4. Catalyzes the conversion of D-ribulose 5-phosphate to formate and 3,4-dihydroxy-2-butanone 4-phosphate. Functionally, catalyzes the conversion of GTP to 2,5-diamino-6-ribosylamino-4(3H)-pyrimidinone 5'-phosphate (DARP), formate and pyrophosphate. This Bacillus cytotoxicus (strain DSM 22905 / CIP 110041 / 391-98 / NVH 391-98) protein is Riboflavin biosynthesis protein RibBA.